We begin with the raw amino-acid sequence, 603 residues long: Sesquiterpene synthase Cad (603 aa).

Over residues 1–13 (MAEVGLSQNSYAS) the composition is skewed to polar residues. Positions 1-23 (MAEVGLSQNSYASANHDKKSEQQ) are disordered. Mg(2+) is bound by residues Asp357, Asp361, Asp498, and Glu506. The short motif at 357 to 361 (DDIFD) is the DDXXD motif element.

This sequence belongs to the terpene synthase family. Tpsa subfamily. Requires Mg(2+) as cofactor. It depends on Mn(2+) as a cofactor. As to expression, mostly expressed in leaves and, to a lower extent, in stems and xylem.

The catalysed reaction is (2E,6E)-farnesyl diphosphate = beta-cadinene + diphosphate. It participates in secondary metabolite biosynthesis; terpenoid biosynthesis. In terms of biological role, sesquiterpene synthase involved in the biosynthesis of volatile compounds. Mediates the conversion of (2E,6E)-farnesyl diphosphate (FPP) into beta-cadinene. Not active with geranyl diphosphate (GPP) and geranylgeranyl diphosphate (GGPP) as substrates. The sequence is that of Sesquiterpene synthase Cad from Chamaecyparis formosensis (Formosan cypress).